We begin with the raw amino-acid sequence, 372 residues long: Glutamate 5-kinase (372 aa).

Position 14 (lysine 14) interacts with ATP. Serine 54, aspartate 141, and asparagine 153 together coordinate substrate. 173–174 (TD) is an ATP binding site. The 79-residue stretch at 280–358 (RGHVVIDAGA…GEIESVLGYM (79 aa)) folds into the PUA domain.

This sequence belongs to the glutamate 5-kinase family.

It localises to the cytoplasm. It carries out the reaction L-glutamate + ATP = L-glutamyl 5-phosphate + ADP. It participates in amino-acid biosynthesis; L-proline biosynthesis; L-glutamate 5-semialdehyde from L-glutamate: step 1/2. In terms of biological role, catalyzes the transfer of a phosphate group to glutamate to form L-glutamate 5-phosphate. This chain is Glutamate 5-kinase, found in Burkholderia lata (strain ATCC 17760 / DSM 23089 / LMG 22485 / NCIMB 9086 / R18194 / 383).